A 308-amino-acid polypeptide reads, in one-letter code: Taste receptor type 2 member 43 (308 aa).

Met1 is a topological domain (extracellular). The helical transmembrane segment at 2–22 (ITFLPIIFSILVVFTFVIGNF) threads the bilayer. Over 23 to 46 (ANGFIALVNSIEWVKRQKISFADQ) the chain is Cytoplasmic. A helical membrane pass occupies residues 47-67 (ILTALAVSRVGLLWILLLNWY). The Extracellular portion of the chain corresponds to 68-86 (STVLNPAFYSVEVRTIAYN). A helical transmembrane segment spans residues 87–107 (LWAVINHFSNWLATSLSIFYL). Topologically, residues 108–126 (LKIANFSNLIFLHLRRRVK) are cytoplasmic. The chain crosses the membrane as a helical span at residues 127-147 (SVVLVILWGPLLFLVCHLFVV). The Extracellular segment spans residues 148–178 (NMNEIIQTKEYEGNMTWKSKLRSAMYLSNTT). N-linked (GlcNAc...) asparagine glycosylation is found at Asn161 and Asn176. A helical membrane pass occupies residues 179–199 (VTILANLVPFILTLISFLLLI). Topologically, residues 200-229 (CSLCKHLKKMQLRDKGSQDPSTKVHIKALQ) are cytoplasmic. Residues 230–249 (TVISLSLCAIYFLSIMISSW) form a helical membrane-spanning segment. The Extracellular portion of the chain corresponds to 250–258 (SLGRVENKA). Residues 259-279 (IFMFCKAIRFSYPSAHAFILI) form a helical membrane-spanning segment. Residues 280 to 308 (WGNKKLKQTLLSVLWNVRYCVKGQKLQSP) lie on the Cytoplasmic side of the membrane.

It belongs to the G-protein coupled receptor T2R family.

Its subcellular location is the membrane. The protein resides in the cell projection. The protein localises to the cilium membrane. Its function is as follows. Gustducin-coupled receptor immplicated in the perception of bitter compounds in the oral cavity and the gastrointestinal tract. Signals through PLCB2 and the calcium-regulated cation channel TRPM5. Activated by the sulfonyl amide sweeteners saccharin and acesulfame K. In airway epithelial cells, binding of bitter compounds increases the intracellular calcium ion concentration and stimulates ciliary beat frequency. May act as chemosensory receptors in airway epithelial cells to detect and eliminate potential noxious agents from the airways. The protein is Taste receptor type 2 member 43 (TAS2R43) of Macaca mulatta (Rhesus macaque).